The sequence spans 204 residues: CASP-like protein 1U3 (204 aa).

Over 1 to 19 (MCEGEKKKDSSSGALYCVN) the chain is Cytoplasmic. Residues 20 to 40 (LALRIVVLGLAVAAAALMATA) traverse the membrane as a helical segment. Residues 41–63 (SQCTIFLYYGGPLHTITYKDFGP) lie on the Extracellular side of the membrane. Residues 64–84 (FVYLVVASSIGAFMEAIAIFL) form a helical membrane-spanning segment. Residues 85–97 (TICKKKDGTPAKV) are Cytoplasmic-facing. The chain crosses the membrane as a helical span at residues 98–118 (LLPLLDAAVPVLLYSATAAAF). Topologically, residues 119 to 146 (AAGDMSYCAVGKRVGVCTTAAAGNFCNQ) are extracellular. Residues 147–167 (VHIAMYVSLAAGVALLVAEIV) traverse the membrane as a helical segment. The Cytoplasmic segment spans residues 168 to 204 (KHWPDSGKKKEGGGGGCGSDSDSDKSTPCHHGCHSKH). The interval 173-204 (SGKKKEGGGGGCGSDSDSDKSTPCHHGCHSKH) is disordered.

It belongs to the Casparian strip membrane proteins (CASP) family. As to quaternary structure, homodimer and heterodimers.

The protein localises to the cell membrane. This is CASP-like protein 1U3 from Oryza sativa subsp. japonica (Rice).